The sequence spans 702 residues: Elongation factor G (702 aa).

Positions 8–286 (DKVRNIGIIA…AVVEYLPSPL (279 aa)) constitute a tr-type G domain. GTP-binding positions include 17 to 24 (AHIDAGKT), 85 to 89 (DTPGH), and 139 to 142 (NKMD).

The protein belongs to the TRAFAC class translation factor GTPase superfamily. Classic translation factor GTPase family. EF-G/EF-2 subfamily.

It is found in the cytoplasm. Its function is as follows. Catalyzes the GTP-dependent ribosomal translocation step during translation elongation. During this step, the ribosome changes from the pre-translocational (PRE) to the post-translocational (POST) state as the newly formed A-site-bound peptidyl-tRNA and P-site-bound deacylated tRNA move to the P and E sites, respectively. Catalyzes the coordinated movement of the two tRNA molecules, the mRNA and conformational changes in the ribosome. This Chloroflexus aggregans (strain MD-66 / DSM 9485) protein is Elongation factor G.